The sequence spans 800 residues: Nucleolar complex protein 3 homolog (800 aa).

2 disordered regions span residues 27–93 (KLKN…DMMD) and 160–187 (GIIP…RELE). Basic residues predominate over residues 40–51 (KKYRKEQRKLRQ). Residues 66–78 (NPKEKRPGKRIER) are compositionally biased toward basic and acidic residues. The span at 79–93 (EEEEEEEALPLDMMD) shows a compositional bias: acidic residues. Residues 160 to 174 (GIIPQTREKPVTDSN) show a composition bias toward basic and acidic residues. The span at 175–187 (KDEEDQEEERELE) shows a compositional bias: acidic residues. Lys333 participates in a covalent cross-link: Glycyl lysine isopeptide (Lys-Gly) (interchain with G-Cter in SUMO2). A coiled-coil region spans residues 451–490 (KEKRKSLSRMQRKWKKAEEKLERELREAEASESTEKKLKL). Ser787 carries the post-translational modification Phosphoserine.

It belongs to the CBF/MAK21 family. In terms of tissue distribution, expressed in colon, heart, kidney, liver, lung, placenta, skeletal muscle, small intestine, spleen and thymus.

The protein resides in the nucleus. It is found in the nucleolus. Its subcellular location is the nucleus speckle. In terms of biological role, may be required for adipogenesis. The polypeptide is Nucleolar complex protein 3 homolog (NOC3L) (Homo sapiens (Human)).